The following is a 71-amino-acid chain: Putative membrane protein insertion efficiency factor (71 aa).

This sequence belongs to the UPF0161 family.

It localises to the cell membrane. Its function is as follows. Could be involved in insertion of integral membrane proteins into the membrane. The protein is Putative membrane protein insertion efficiency factor of Clostridium acetobutylicum (strain ATCC 824 / DSM 792 / JCM 1419 / IAM 19013 / LMG 5710 / NBRC 13948 / NRRL B-527 / VKM B-1787 / 2291 / W).